The following is a 341-amino-acid chain: Holliday junction branch migration complex subunit RuvB (341 aa).

Positions 1-22 are disordered; it reads MSETAGKGVTMPEIMQSSYPDE. A large ATPase domain (RuvB-L) region spans residues 4 to 193; it reads TAGKGVTMPE…FGIISRLEFY (190 aa). ATP contacts are provided by residues I32, R33, G74, K77, T78, T79, 140–142, R183, Y193, and R230; that span reads EDY. A Mg(2+)-binding site is contributed by T78. Residues 194-264 form a small ATPAse domain (RuvB-S) region; it reads TPEELSQIIL…LVNHALQKLD (71 aa). The segment at 267–341 is head domain (RuvB-H); the sequence is EKGLDQMDRK…KAYKHLNLTD (75 aa). Residues R322 and R327 each contribute to the DNA site.

This sequence belongs to the RuvB family. As to quaternary structure, homohexamer. Forms an RuvA(8)-RuvB(12)-Holliday junction (HJ) complex. HJ DNA is sandwiched between 2 RuvA tetramers; dsDNA enters through RuvA and exits via RuvB. An RuvB hexamer assembles on each DNA strand where it exits the tetramer. Each RuvB hexamer is contacted by two RuvA subunits (via domain III) on 2 adjacent RuvB subunits; this complex drives branch migration. In the full resolvosome a probable DNA-RuvA(4)-RuvB(12)-RuvC(2) complex forms which resolves the HJ.

The protein localises to the cytoplasm. It carries out the reaction ATP + H2O = ADP + phosphate + H(+). Functionally, the RuvA-RuvB-RuvC complex processes Holliday junction (HJ) DNA during genetic recombination and DNA repair, while the RuvA-RuvB complex plays an important role in the rescue of blocked DNA replication forks via replication fork reversal (RFR). RuvA specifically binds to HJ cruciform DNA, conferring on it an open structure. The RuvB hexamer acts as an ATP-dependent pump, pulling dsDNA into and through the RuvAB complex. RuvB forms 2 homohexamers on either side of HJ DNA bound by 1 or 2 RuvA tetramers; 4 subunits per hexamer contact DNA at a time. Coordinated motions by a converter formed by DNA-disengaged RuvB subunits stimulates ATP hydrolysis and nucleotide exchange. Immobilization of the converter enables RuvB to convert the ATP-contained energy into a lever motion, pulling 2 nucleotides of DNA out of the RuvA tetramer per ATP hydrolyzed, thus driving DNA branch migration. The RuvB motors rotate together with the DNA substrate, which together with the progressing nucleotide cycle form the mechanistic basis for DNA recombination by continuous HJ branch migration. Branch migration allows RuvC to scan DNA until it finds its consensus sequence, where it cleaves and resolves cruciform DNA. The sequence is that of Holliday junction branch migration complex subunit RuvB from Lawsonia intracellularis (strain PHE/MN1-00).